A 223-amino-acid polypeptide reads, in one-letter code: Protein FAM3D (223 aa).

Positions 1 to 25 (MRVAGLIRVVVFIFTIVTMWVFLRS) are cleaved as a signal peptide. Disulfide bonds link C54/C82 and C60/C217. In terms of domain architecture, GG-type lectin spans 62 to 221 (NNFFAFKISS…LELEGCVPRK (160 aa)). N106 carries an N-linked (GlcNAc...) asparagine glycan.

Belongs to the FAM3 family.

Its subcellular location is the secreted. The protein is Protein FAM3D of Mus musculus (Mouse).